A 160-amino-acid chain; its full sequence is G-protein-signaling modulator 3 (160 aa).

The interval 1–55 (MEAERPQEEEDGEQGPPQDEEGWPPPNSTTRPWRSAPPSPPPPGTRHTALGPRSA) is disordered. Acidic residues predominate over residues 7–22 (QEEEDGEQGPPQDEEG). A phosphoserine mark is found at S35, S39, S56, and S59. The span at 35–44 (SAPPSPPPPG) shows a compositional bias: pro residues. The residue at position 62 (T62) is a Phosphothreonine. GoLoco domains are found at residues 62 to 84 (TELL…RATF), 104 to 126 (REQL…RSEP), and 132 to 155 (GQEL…RSRP).

In terms of tissue distribution, expressed in heart, placenta, lung and liver.

It localises to the cytoplasm. Its function is as follows. Interacts with subunit of G(i) alpha proteins and regulates the activation of G(i) alpha proteins. The chain is G-protein-signaling modulator 3 (GPSM3) from Homo sapiens (Human).